A 563-amino-acid polypeptide reads, in one-letter code: Choline transporter (563 aa).

The segment at 1–25 (MSIRNDNASGGYMQPDQSSNASMHK) is disordered. The Extracellular portion of the chain corresponds to 1 to 57 (MSIRNDNASGGYMQPDQSSNASMHKRDLRVEEEIKPLDDMDSKGAVAADGEVHLRKS). 2 N-linked (GlcNAc...) asparagine glycosylation sites follow: asparagine 7 and asparagine 20. Serine 22 and serine 42 each carry phosphoserine. The helical transmembrane segment at 58–78 (FSLWSILGVGFGLTNSWFGIS) threads the bilayer. Residues 79–87 (TSMVAGISS) are Cytoplasmic-facing. A helical membrane pass occupies residues 88-108 (GGPMMIVYGIIIVALISICIG). At 109–182 (TSLGELSSAY…LTHPEFIPKR (74 aa)) the chain is on the extracellular side. Residues 183-203 (WHIFVCFELLHLFLMFFNCYG) traverse the membrane as a helical segment. The Cytoplasmic portion of the chain corresponds to 204-205 (KS). Residues 206 to 226 (LPIISSSSLYISLLSFFTITI) traverse the membrane as a helical segment. The Extracellular segment spans residues 227–255 (TVLACSHGKFNDAKFVFATFNNETGWKNG). A glycan (N-linked (GlcNAc...) asparagine) is linked at asparagine 248. The chain crosses the membrane as a helical span at residues 256–276 (GIAFIVGLINPAWSFSCLDCA). The Cytoplasmic segment spans residues 277-293 (THMAFEVEKPERVIPIA). Residues 294–314 (IMGTVAIGFVTSFCYVIAMFF) traverse the membrane as a helical segment. The Extracellular segment spans residues 315–342 (SIQDLDAVLSSTTGAPILDIYNQALGNK). N-linked (GlcNAc...) asparagine glycosylation occurs at asparagine 341. The helical transmembrane segment at 343–363 (SGAIFLGCLILFTSFGCVIAC) threads the bilayer. The Cytoplasmic portion of the chain corresponds to 364–398 (HTWQARLCWSFARDNGLPLSRLWSQVNPHTGVPLN). A helical membrane pass occupies residues 399 to 417 (AHLMSCAWITLIGLLYLAS). At 418–426 (STAFQSLIT) the chain is on the extracellular side. The helical transmembrane segment at 427 to 445 (GCIAFLLLSYIIPVICLLA) threads the bilayer. At 446–465 (KKRNIAHGPFWLGKFGFFSN) the chain is on the cytoplasmic side. A helical membrane pass occupies residues 466-486 (IVLLGWTVFSVVFFSFPPVLP). Residues 487-491 (VTKDN) lie on the Extracellular side of the membrane. A helical membrane pass occupies residues 492–512 (MNYVCVVIVGYTAYSILYWKY). At 513 to 563 (KGKKEFHALEESENEQAEYSNNFDTIEDSREFSVAASDVELENEHVPWGKK) the chain is on the cytoplasmic side.

The protein belongs to the amino acid-polyamine-organocation (APC) superfamily. Amino acid/choline transporter (ACT) (TC 2.A.3.4) family.

The protein localises to the membrane. The catalysed reaction is choline(out) = choline(in). It catalyses the reaction ethanolamine(in) = ethanolamine(out). In terms of biological role, sole choline transporter in yeast. Also transports ethanolamine. The chain is Choline transporter (HNM1) from Saccharomyces cerevisiae (strain ATCC 204508 / S288c) (Baker's yeast).